A 1480-amino-acid polypeptide reads, in one-letter code: UDP-N-acetylglucosamine--peptide N-acetylglucosaminyltransferase (1480 aa).

4 TPR repeats span residues 38–71 (IFLY…SKQK), 113–146 (VQVL…STSN), 176–209 (ATIL…IKDP), and 288–321 (STIC…QPSF). A compositionally biased stretch (basic and acidic residues) spans 468-485 (PQEKESPKSDKIASEKPL). Positions 468 to 497 (PQEKESPKSDKIASEKPLVESNPGRSRTPS) are disordered. TPR repeat units follow at residues 613-646 (YEPF…NPRF) and 648-680 (DGYL…DPDN). The interval 1093–1128 (LSLDGSDATSSSVDSGIGSRTHSEAPIGGGDKDEGA) is disordered. Residues 1099 to 1112 (DATSSSVDSGIGSR) are compositionally biased toward polar residues. UDP is bound by residues Gln-1269, Lys-1272, 1333-1336 (HIRR), 1351-1353 (GST), and Asp-1357.

It belongs to the glycosyltransferase 41 family. O-GlcNAc transferase subfamily.

It is found in the cytoplasm. Its subcellular location is the nucleus. It carries out the reaction L-seryl-[protein] + UDP-N-acetyl-alpha-D-glucosamine = 3-O-(N-acetyl-beta-D-glucosaminyl)-L-seryl-[protein] + UDP + H(+). The enzyme catalyses L-threonyl-[protein] + UDP-N-acetyl-alpha-D-glucosamine = 3-O-(N-acetyl-beta-D-glucosaminyl)-L-threonyl-[protein] + UDP + H(+). It functions in the pathway protein modification; protein glycosylation. In terms of biological role, catalyzes the transfer of a single N-acetylglucosamine from UDP-GlcNAc to a serine or threonine residue in cytoplasmic and nuclear proteins resulting in their modification with a beta-linked N-acetylglucosamine (O-GlcNAc). The sequence is that of UDP-N-acetylglucosamine--peptide N-acetylglucosaminyltransferase from Giardia intestinalis (strain ATCC 50803 / WB clone C6) (Giardia lamblia).